We begin with the raw amino-acid sequence, 319 residues long: Cytochrome f (319 aa).

The signal sequence occupies residues 1 to 35; that stretch reads METRNIFSWIKEQITRSISVSLMIYIITRTAVSNA. Heme is bound by residues tyrosine 36, cysteine 56, cysteine 59, and histidine 60. A helical transmembrane segment spans residues 285-305; it reads VQGLLFFLASVILAQIFLVLK.

Belongs to the cytochrome f family. As to quaternary structure, the 4 large subunits of the cytochrome b6-f complex are cytochrome b6, subunit IV (17 kDa polypeptide, petD), cytochrome f and the Rieske protein, while the 4 small subunits are PetG, PetL, PetM and PetN. The complex functions as a dimer. The cofactor is heme.

The protein resides in the plastid. It localises to the chloroplast thylakoid membrane. In terms of biological role, component of the cytochrome b6-f complex, which mediates electron transfer between photosystem II (PSII) and photosystem I (PSI), cyclic electron flow around PSI, and state transitions. The chain is Cytochrome f from Coffea arabica (Arabian coffee).